We begin with the raw amino-acid sequence, 302 residues long: Sulfate adenylyltransferase subunit 2 (302 aa).

A disordered region spans residues Arg280–Phe302.

The protein belongs to the PAPS reductase family. CysD subfamily. As to quaternary structure, heterodimer composed of CysD, the smaller subunit, and CysN.

It carries out the reaction sulfate + ATP + H(+) = adenosine 5'-phosphosulfate + diphosphate. It participates in sulfur metabolism; hydrogen sulfide biosynthesis; sulfite from sulfate: step 1/3. Its function is as follows. With CysN forms the ATP sulfurylase (ATPS) that catalyzes the adenylation of sulfate producing adenosine 5'-phosphosulfate (APS) and diphosphate, the first enzymatic step in sulfur assimilation pathway. APS synthesis involves the formation of a high-energy phosphoric-sulfuric acid anhydride bond driven by GTP hydrolysis by CysN coupled to ATP hydrolysis by CysD. This is Sulfate adenylyltransferase subunit 2 from Shewanella amazonensis (strain ATCC BAA-1098 / SB2B).